The following is a 57-amino-acid chain: Protein YnaL (57 aa).

The segment at Leu-7–Cys-57 is disordered. Over residues Val-11–Pro-35 the composition is skewed to pro residues. The segment covering His-46–Cys-57 has biased composition (basic residues).

The polypeptide is Protein YnaL (Escherichia coli (strain K12)).